Reading from the N-terminus, the 257-residue chain is Small ribosomal subunit protein uS3 (257 aa).

One can recognise a KH type-2 domain in the interval 40–110 (IRKYLSTKYK…LVSLKVVEVQ (71 aa)). The interval 223-257 (ANKEFSRSSKPKKGSFNRSSRSKNTKPAPKQAVSE) is disordered. Residues 231-246 (SKPKKGSFNRSSRSKN) are compositionally biased toward basic residues.

It belongs to the universal ribosomal protein uS3 family. As to quaternary structure, part of the 30S ribosomal subunit. Forms a tight complex with proteins S10 and S14.

Its function is as follows. Binds the lower part of the 30S subunit head. Binds mRNA in the 70S ribosome, positioning it for translation. The protein is Small ribosomal subunit protein uS3 of Ureaplasma parvum serovar 3 (strain ATCC 27815 / 27 / NCTC 11736).